A 482-amino-acid polypeptide reads, in one-letter code: Bifunctional protein GlmU (482 aa).

Residues 1–238 (MSATSPAAVV…HREILGINNR (238 aa)) are pyrophosphorylase. Residues 12-15 (LAAG), Lys-26, Gln-79, and 84-85 (GT) each bind UDP-N-acetyl-alpha-D-glucosamine. Asp-110 contributes to the Mg(2+) binding site. Residues Gly-147, Glu-163, Asn-178, and Asn-236 each coordinate UDP-N-acetyl-alpha-D-glucosamine. Asn-236 contacts Mg(2+). The linker stretch occupies residues 239-259 (LQLAEARRLLNERLLERAMLA). The interval 260-482 (GVTVVDPAST…ASSQETDGQS (223 aa)) is N-acetyltransferase. UDP-N-acetyl-alpha-D-glucosamine-binding residues include Arg-341 and Lys-359. His-371 serves as the catalytic Proton acceptor. Residues Tyr-374 and Asn-385 each coordinate UDP-N-acetyl-alpha-D-glucosamine. Acetyl-CoA is bound by residues Ala-388, 394-395 (NY), Ser-413, Ala-431, and Arg-448. Positions 458-482 (VARKRPGSAAAQAAQASSQETDGQS) are disordered. Low complexity predominate over residues 465 to 476 (SAAAQAAQASSQ).

It in the N-terminal section; belongs to the N-acetylglucosamine-1-phosphate uridyltransferase family. In the C-terminal section; belongs to the transferase hexapeptide repeat family. In terms of assembly, homotrimer. Requires Mg(2+) as cofactor.

It localises to the cytoplasm. The catalysed reaction is alpha-D-glucosamine 1-phosphate + acetyl-CoA = N-acetyl-alpha-D-glucosamine 1-phosphate + CoA + H(+). It catalyses the reaction N-acetyl-alpha-D-glucosamine 1-phosphate + UTP + H(+) = UDP-N-acetyl-alpha-D-glucosamine + diphosphate. It participates in nucleotide-sugar biosynthesis; UDP-N-acetyl-alpha-D-glucosamine biosynthesis; N-acetyl-alpha-D-glucosamine 1-phosphate from alpha-D-glucosamine 6-phosphate (route II): step 2/2. Its pathway is nucleotide-sugar biosynthesis; UDP-N-acetyl-alpha-D-glucosamine biosynthesis; UDP-N-acetyl-alpha-D-glucosamine from N-acetyl-alpha-D-glucosamine 1-phosphate: step 1/1. It functions in the pathway bacterial outer membrane biogenesis; LPS lipid A biosynthesis. Functionally, catalyzes the last two sequential reactions in the de novo biosynthetic pathway for UDP-N-acetylglucosamine (UDP-GlcNAc). The C-terminal domain catalyzes the transfer of acetyl group from acetyl coenzyme A to glucosamine-1-phosphate (GlcN-1-P) to produce N-acetylglucosamine-1-phosphate (GlcNAc-1-P), which is converted into UDP-GlcNAc by the transfer of uridine 5-monophosphate (from uridine 5-triphosphate), a reaction catalyzed by the N-terminal domain. In Streptomyces griseus subsp. griseus (strain JCM 4626 / CBS 651.72 / NBRC 13350 / KCC S-0626 / ISP 5235), this protein is Bifunctional protein GlmU.